We begin with the raw amino-acid sequence, 734 residues long: Ribosomal RNA large subunit methyltransferase K/L (734 aa).

In terms of domain architecture, THUMP spans 49–167 (HAYRICMWSR…KTEHTYCLDL (119 aa)).

The protein belongs to the methyltransferase superfamily. RlmKL family.

It localises to the cytoplasm. The catalysed reaction is guanosine(2445) in 23S rRNA + S-adenosyl-L-methionine = N(2)-methylguanosine(2445) in 23S rRNA + S-adenosyl-L-homocysteine + H(+). It catalyses the reaction guanosine(2069) in 23S rRNA + S-adenosyl-L-methionine = N(2)-methylguanosine(2069) in 23S rRNA + S-adenosyl-L-homocysteine + H(+). Its function is as follows. Specifically methylates the guanine in position 2445 (m2G2445) and the guanine in position 2069 (m7G2069) of 23S rRNA. This Acinetobacter baumannii (strain AYE) protein is Ribosomal RNA large subunit methyltransferase K/L.